Here is a 454-residue protein sequence, read N- to C-terminus: Tegument protein VP16 homolog (454 aa).

This sequence belongs to the herpesviridae tegument protein VP16 protein family. In terms of assembly, associates with the VP16-induced complex; binding to host HCFC1 activates VP16 for association with the octamer motif-binding host protein POU2F1, to form a multiprotein-DNA complex responsible for activating transcription of the viral immediate early genes.

It is found in the virion tegument. It localises to the host nucleus. Its function is as follows. Transcriptional activator of immediate-early (IE) gene products (alpha genes). Acts as a key activator of lytic infection by initiating the lytic program through the assembly of the transcriptional regulatory VP16-induced complex composed of VP16 and two cellular factors, HCFC1 and POU2F1. VP16-induced complex represents a regulatory switch: when it is on, it promotes IE-gene expression and thus lytic infection, and when it is off, it limits IE-gene transcription favoring latent infection. Functionally, may play a role in the aggregation of tegument proteins around nucleocapsids during virus morphogenesis. The protein is Tegument protein VP16 homolog (12) of Equine herpesvirus 4 (strain 1942) (EHV-4).